The following is a 1422-amino-acid chain: Cardiac-enriched FHL2-interacting protein (1422 aa).

The interval 1–23 (MQGNKKCADGFSDTSSIGSVLDE) is disordered. At Thr-119 the chain carries Phosphothreonine. Disordered regions lie at residues 151 to 177 (RTEA…KFAH), 199 to 265 (AGVS…GRGK), 279 to 443 (SAFE…SSPF), 459 to 500 (LETS…KAPS), 516 to 718 (YSPL…SDSQ), 731 to 850 (FSTS…TNKH), 877 to 1127 (VSSE…HLER), 1142 to 1244 (TGAA…GWEP), and 1353 to 1422 (RQGS…EGVS). The span at 201–210 (VSSTHQSSHQ) shows a compositional bias: polar residues. 2 stretches are compositionally biased toward basic and acidic residues: residues 284–298 (WDAH…KDIT) and 305–315 (KAPKHYEDMPL). The residue at position 327 (Ser-327) is a Phosphoserine. Polar residues predominate over residues 342–351 (SPSGIQSTSG). A compositionally biased stretch (basic and acidic residues) spans 395–405 (GPHDASEDKKQ). The span at 461-470 (TSDTQPVETS) shows a compositional bias: polar residues. At Ser-472 the chain carries Phosphoserine. 3 stretches are compositionally biased toward basic and acidic residues: residues 481 to 495 (QEKE…DSYK), 524 to 537 (GFDE…DGKQ), and 579 to 588 (PAMDSRESFA). A compositionally biased stretch (low complexity) spans 590 to 606 (SHPTFSSPSASSKTHFS). Basic and acidic residues-rich tracts occupy residues 611–622 (AAERNSHEKEEA), 635–644 (WHPDSRENLP), and 653–675 (CNRD…EKRL). Residues 731–744 (FSTSSSDQSFASFE) are compositionally biased toward low complexity. The span at 790 to 801 (GVEEHRQKETQR) shows a compositional bias: basic and acidic residues. Ser-815 carries the phosphoserine modification. Positions 828–839 (ADKDTALSHAKD) are enriched in basic and acidic residues. 2 stretches are compositionally biased toward polar residues: residues 907–926 (SESQ…STEQ) and 944–954 (QDETSQQTRKG). The span at 975 to 991 (ADERLAHEKSRSADSGK) shows a compositional bias: basic and acidic residues. Residues 1048–1067 (AATSPNPSSLGGSSTCSPAA) are compositionally biased toward polar residues. Pro residues predominate over residues 1087–1099 (PPGPGPWASPGPS). A compositionally biased stretch (basic residues) spans 1173 to 1184 (RRAKKLASKRRK). Positions 1185-1202 (SDQMSEKHTEAWEGKSFT) are enriched in basic and acidic residues. Residues 1353–1366 (RQGSSHRPQSSQGA) are compositionally biased toward polar residues. Positions 1411–1422 (DDLEDFATEGVS) are enriched in acidic residues.

As to quaternary structure, interacts with FHL2.

It localises to the cytoplasm. Its subcellular location is the myofibril. The protein resides in the sarcomere. It is found in the z line. Functionally, plays an important role in cardiomyocyte hypertrophy via activation of the calcineurin/NFAT signaling pathway. This Rattus norvegicus (Rat) protein is Cardiac-enriched FHL2-interacting protein.